A 189-amino-acid polypeptide reads, in one-letter code: Elongation factor P (189 aa).

It belongs to the elongation factor P family.

It is found in the cytoplasm. The protein operates within protein biosynthesis; polypeptide chain elongation. Functionally, involved in peptide bond synthesis. Stimulates efficient translation and peptide-bond synthesis on native or reconstituted 70S ribosomes in vitro. Probably functions indirectly by altering the affinity of the ribosome for aminoacyl-tRNA, thus increasing their reactivity as acceptors for peptidyl transferase. In Pseudomonas syringae pv. tomato (strain ATCC BAA-871 / DC3000), this protein is Elongation factor P.